A 222-amino-acid polypeptide reads, in one-letter code: Deoxyribose-phosphate aldolase (222 aa).

Residue Asp-89 is the Proton donor/acceptor of the active site. The active-site Schiff-base intermediate with acetaldehyde is Lys-151. Lys-180 (proton donor/acceptor) is an active-site residue.

This sequence belongs to the DeoC/FbaB aldolase family. DeoC type 1 subfamily.

It localises to the cytoplasm. It catalyses the reaction 2-deoxy-D-ribose 5-phosphate = D-glyceraldehyde 3-phosphate + acetaldehyde. Its pathway is carbohydrate degradation; 2-deoxy-D-ribose 1-phosphate degradation; D-glyceraldehyde 3-phosphate and acetaldehyde from 2-deoxy-alpha-D-ribose 1-phosphate: step 2/2. Functionally, catalyzes a reversible aldol reaction between acetaldehyde and D-glyceraldehyde 3-phosphate to generate 2-deoxy-D-ribose 5-phosphate. This is Deoxyribose-phosphate aldolase from Acholeplasma laidlawii (strain PG-8A).